The sequence spans 223 residues: AMSH-like ubiquitin thioesterase 2 (223 aa).

The region spanning 49-177 (VHISERLLED…YGIFKLTDPG (129 aa)) is the MPN domain. Zn(2+) is bound by residues histidine 127, histidine 129, aspartate 140, histidine 142, cysteine 185, histidine 191, and histidine 193. A JAMM motif motif is present at residues 127–140 (HTHPSQGCFMSSVD).

Belongs to the peptidase M67C family. Zn(2+) serves as cofactor.

In terms of biological role, zinc metalloprotease that cleaves 'Lys-48'- and 'Lys-63'-linked polyubiquitin chains. The protein is AMSH-like ubiquitin thioesterase 2 (AMSH2) of Arabidopsis thaliana (Mouse-ear cress).